We begin with the raw amino-acid sequence, 1140 residues long: Centrosomal protein of 135 kDa (1140 aa).

Residues 11-64 form a homodimerization region; the sequence is NIRKRLDQLGYRQTLTVECLPLVEKLFSDLVHTTESLRQSKLSAVKAEKESANF. 2 coiled-coil regions span residues 75–151 and 199–416; these read NARL…KNLH and LQVA…FAVT. 2 positions are modified to phosphoserine: S383 and S439. Coiled coils occupy residues 447–644, 668–1036, and 1079–1113; these read LKGI…LENK, SLRI…LESL, and NTMLRAKVAQLQTDYDALKRQISTERYERERAIQE. S688 carries the post-translational modification Phosphoserine. Residues 1114–1140 form a disordered region; sequence MRRHGLATPPLSSTLRSPSHSPEHRNV. T1121 is modified (phosphothreonine). Positions 1121–1133 are enriched in low complexity; that stretch reads TPPLSSTLRSPSH. The residue at position 1130 (S1130) is a Phosphoserine.

The protein belongs to the CEP135/TSGA10 family. Homodimer. Interacts with DCTN2. Interacts with CEP250.

Its subcellular location is the cytoplasm. It is found in the cytoskeleton. The protein resides in the microtubule organizing center. It localises to the centrosome. The protein localises to the centriole. In terms of biological role, centrosomal microtubule-binding protein involved in centriole biogenesis. Acts as a scaffolding protein during early centriole biogenesis. Required for the targeting of centriole satellite proteins to centrosomes such as of PCM1, SSX2IP and CEP290 and recruitment of WRAP73 to centrioles. Also required for centriole-centriole cohesion during interphase by acting as a platform protein for CEP250 at the centriole. Required for the recruitment of CEP295 to the proximal end of new-born centrioles at the centriolar microtubule wall during early S phase in a PLK4-dependent manner. The chain is Centrosomal protein of 135 kDa from Homo sapiens (Human).